A 381-amino-acid chain; its full sequence is Teichoic acid glycerol-phosphate primase (381 aa).

This sequence belongs to the CDP-glycerol glycerophosphotransferase family.

The protein resides in the cell membrane. It catalyses the reaction N-acetyl-beta-D-mannosaminyl-(1-&gt;4)-N-acetyl-alpha-D-glucosaminyl di-trans,octa-cis-undecaprenyl diphosphate + CDP-glycerol = 4-O-[(2R)-glycerylphospho]-N-acetyl-beta-D-mannosaminyl-(1-&gt;4)-N-acetyl-alpha-D-glucosaminyl di-trans,octa-cis-undecaprenyl diphosphate + CMP + H(+). The protein operates within cell wall biogenesis; poly(glycerol phosphate) teichoic acid biosynthesis. In terms of biological role, catalyzes the addition of a single glycerol phosphate residue to the prenoldiphosphate-linked disaccharide, as a primer for polymerisation by TagF. The chain is Teichoic acid glycerol-phosphate primase (tagB) from Bacillus subtilis (strain 168).